The primary structure comprises 130 residues: MASNFTQFVLVDNGGTGDVTVAPSNFANGVAEWISSNSRSQAYKVTCSVRQSSAQNRKYTIKVEVPKVATQTVGGVELPVAAWRSYLNMELTIPIFATNSDCELIVKAMQGLLKDGNPIPSAIAANSGIY.

The segment at 32–105 is viral RNA-binding; the sequence is EWISSNSRSQ…FATNSDCELI (74 aa).

Belongs to the Leviviricetes capsid protein family. In terms of assembly, homodimer. The capsid proteins form dimers that assemble by group of 5. Twelve such pentamers are linked together with free dimers. The homodimers binds to the viral RNA via an operator hairpin, but also to many other RNA sequences in the viral genome; this interaction probably shifts the virus from the replicative to the assembly phase and ensures specific encapsidation of the viral genome.

The protein resides in the virion. In terms of biological role, capsid protein self-assembles to form an icosahedral capsid with a T=3 symmetry, about 26 nm in diameter, and consisting of 89 capsid proteins dimers (178 capsid proteins). Involved in viral genome encapsidation through the interaction between a capsid protein dimer and the multiple packaging signals present in the RNA genome. The capsid also contains 1 copy of the A2 maturation protein. Its function is as follows. Acts as a translational repressor of viral replicase synthesis late in infection. This latter function is the result of capsid protein interaction with an RNA hairpin which contains the replicase ribosome-binding site. This chain is Capsid protein, found in Escherichia coli (Bacteriophage MS2).